Here is a 196-residue protein sequence, read N- to C-terminus: Probable malonic semialdehyde reductase RutE (196 aa).

This sequence belongs to the nitroreductase family. HadB/RutE subfamily. FMN is required as a cofactor.

The catalysed reaction is 3-hydroxypropanoate + NADP(+) = 3-oxopropanoate + NADPH + H(+). In terms of biological role, may reduce toxic product malonic semialdehyde to 3-hydroxypropionic acid, which is excreted. The polypeptide is Probable malonic semialdehyde reductase RutE (Escherichia coli O45:K1 (strain S88 / ExPEC)).